The following is a 299-amino-acid chain: Probable alpha-L-glutamate ligase 2 (299 aa).

The ATP-grasp domain occupies 104–287 (MQLMSRRGIG…VAGAIIEFVE (184 aa)). ATP is bound by residues Lys141, 178 to 179 (EY), Asp187, and 211 to 213 (RSN). Positions 248, 260, and 262 each coordinate Mg(2+). Positions 248, 260, and 262 each coordinate Mn(2+).

The protein belongs to the RimK family. The cofactor is Mg(2+). Requires Mn(2+) as cofactor.

The chain is Probable alpha-L-glutamate ligase 2 from Shewanella sp. (strain MR-4).